The primary structure comprises 373 residues: Queuine tRNA-ribosyltransferase (373 aa).

The active-site Proton acceptor is the aspartate 91. Residues 91-95 (DSGGF), aspartate 145, glutamine 187, and glycine 214 each bind substrate. An RNA binding region spans residues 245–251 (GVGKPED). The active-site Nucleophile is aspartate 264. The RNA binding; important for wobble base 34 recognition stretch occupies residues 269 to 273 (TRNAR). Residues cysteine 302, cysteine 304, cysteine 307, and histidine 333 each contribute to the Zn(2+) site.

It belongs to the queuine tRNA-ribosyltransferase family. Homodimer. Within each dimer, one monomer is responsible for RNA recognition and catalysis, while the other monomer binds to the replacement base PreQ1. It depends on Zn(2+) as a cofactor.

The catalysed reaction is 7-aminomethyl-7-carbaguanine + guanosine(34) in tRNA = 7-aminomethyl-7-carbaguanosine(34) in tRNA + guanine. The protein operates within tRNA modification; tRNA-queuosine biosynthesis. Its function is as follows. Catalyzes the base-exchange of a guanine (G) residue with the queuine precursor 7-aminomethyl-7-deazaguanine (PreQ1) at position 34 (anticodon wobble position) in tRNAs with GU(N) anticodons (tRNA-Asp, -Asn, -His and -Tyr). Catalysis occurs through a double-displacement mechanism. The nucleophile active site attacks the C1' of nucleotide 34 to detach the guanine base from the RNA, forming a covalent enzyme-RNA intermediate. The proton acceptor active site deprotonates the incoming PreQ1, allowing a nucleophilic attack on the C1' of the ribose to form the product. After dissociation, two additional enzymatic reactions on the tRNA convert PreQ1 to queuine (Q), resulting in the hypermodified nucleoside queuosine (7-(((4,5-cis-dihydroxy-2-cyclopenten-1-yl)amino)methyl)-7-deazaguanosine). In Idiomarina loihiensis (strain ATCC BAA-735 / DSM 15497 / L2-TR), this protein is Queuine tRNA-ribosyltransferase.